Here is a 359-residue protein sequence, read N- to C-terminus: MMP endo-(1,4)-3-O-methyl-alpha-D-mannosidase (359 aa).

Monomer in solution.

It catalyses the reaction Endohydrolysis of 3-O-methyl-alpha-D-mannosyl-(1-&gt;4)-3-O-methyl-D-mannose linkages within (1,4)-3-O-methyl-alpha-D-mannnan substrates.. Hydrolase involved in the biosynthesis of 3-O-methylmannose polysaccharides (MMP), which are intracellular polymethylated polysaccharides implicated in the modulation of fatty acid metabolism in non-tuberculous mycobacteria. Highly specific hydrolase that catalyzes the internal cleavage of MMP. Is able to hydrolyze purified MMP into distinct lower order oligomannosides but does not cleave acylated or deacylated forms of 6-O-methylglucose lipopolysaccharide (MGLP), beta-mannans, synthetic 4alpha-oligomannosides or its own reaction products. Products were identified as four distinct oligomannosides differing in the number of mannose units (4 to 8) and methylation pattern (free or methylated C1-OH). Might serve as a recycling enzyme that hydrolyzes mature MMP into defined-size smaller oligomannosides that are, in turn, substrates for ManT and MeT1 activities for further processing into new daughter MMP chains. This is MMP endo-(1,4)-3-O-methyl-alpha-D-mannosidase from Mycolicibacterium hassiacum (strain DSM 44199 / CIP 105218 / JCM 12690 / 3849) (Mycobacterium hassiacum).